The chain runs to 163 residues: Choriogonadotropin subunit beta (163 aa).

The N-terminal stretch at 1 to 20 (MEMLQGLLLCLLLSTGGAWA) is a signal peptide. Intrachain disulfides connect Cys29–Cys76, Cys43–Cys91, Cys46–Cys129, Cys54–Cys107, Cys58–Cys109, and Cys112–Cys119. Asn50 is a glycosylation site (N-linked (GlcNAc...) asparagine). Asn124 carries N-linked (GlcNAc...) asparagine glycosylation. The segment covering 135 to 151 (QDSSSNVPPSNLTSPSQ) has biased composition (polar residues). Residues 135-163 (QDSSSNVPPSNLTSPSQLLEPAVTPLVPQ) are disordered. The O-linked (GalNAc...) serine glycan is linked to Ser139. Asn145 is a glycosylation site (N-linked (GlcNAc...) asparagine). Residue Ser150 is glycosylated (O-linked (GalNAc...) serine).

It belongs to the glycoprotein hormones subunit beta family. Heterodimer of a common alpha chain and a unique beta chain which confers biological specificity to thyrotropin, lutropin, follitropin and gonadotropin.

It is found in the secreted. Its function is as follows. Stimulates the ovaries to synthesize the steroids that are essential for the maintenance of pregnancy. The protein is Choriogonadotropin subunit beta (CGB) of Saimiri boliviensis boliviensis (Bolivian squirrel monkey).